A 300-amino-acid chain; its full sequence is Protease HtpX (300 aa).

2 consecutive transmembrane segments (helical) span residues 4–24 (ILLF…TLRL) and 40–60 (SLLI…LFIS). Zn(2+) is bound at residue histidine 145. The active site involves glutamate 146. Zn(2+) is bound at residue histidine 149. 2 consecutive transmembrane segments (helical) span residues 153–173 (GDMV…MFFA) and 193–213 (LGFF…GLVA). Position 225 (glutamate 225) interacts with Zn(2+).

The protein belongs to the peptidase M48B family. Zn(2+) serves as cofactor.

The protein localises to the cell inner membrane. This chain is Protease HtpX, found in Chromohalobacter salexigens (strain ATCC BAA-138 / DSM 3043 / CIP 106854 / NCIMB 13768 / 1H11).